Consider the following 119-residue polypeptide: Large ribosomal subunit protein uL22c (119 aa).

Belongs to the universal ribosomal protein uL22 family. Part of the 50S ribosomal subunit.

It localises to the plastid. Its subcellular location is the chloroplast. In terms of biological role, this protein binds specifically to 23S rRNA. Functionally, the globular domain of the protein is located near the polypeptide exit tunnel on the outside of the subunit, while an extended beta-hairpin is found that lines the wall of the exit tunnel in the center of the 70S ribosome. The protein is Large ribosomal subunit protein uL22c (rpl22) of Chlorokybus atmophyticus (Soil alga).